Consider the following 334-residue polypeptide: L-lactate dehydrogenase B chain (334 aa).

Residues 30-58 (GQVG…LEDK) and R100 each bind NAD(+). R107, N139, and R170 together coordinate substrate. Position 139 (N139) interacts with NAD(+). H194 acts as the Proton acceptor in catalysis. T249 is a substrate binding site.

This sequence belongs to the LDH/MDH superfamily. LDH family. Homotetramer.

It localises to the cytoplasm. It carries out the reaction (S)-lactate + NAD(+) = pyruvate + NADH + H(+). The protein operates within fermentation; pyruvate fermentation to lactate; (S)-lactate from pyruvate: step 1/1. Interconverts simultaneously and stereospecifically pyruvate and lactate with concomitant interconversion of NADH and NAD(+). The polypeptide is L-lactate dehydrogenase B chain (ldhb) (Squalus acanthias (Spiny dogfish)).